Reading from the N-terminus, the 149-residue chain is Large ribosomal subunit protein bL9 (149 aa).

It belongs to the bacterial ribosomal protein bL9 family.

Its function is as follows. Binds to the 23S rRNA. The polypeptide is Large ribosomal subunit protein bL9 (Klebsiella pneumoniae subsp. pneumoniae (strain ATCC 700721 / MGH 78578)).